The following is a 169-amino-acid chain: Peptide deformylase (169 aa).

Positions 91 and 133 each coordinate Fe cation. Residue Glu134 is part of the active site. Position 137 (His137) interacts with Fe cation.

This sequence belongs to the polypeptide deformylase family. Requires Fe(2+) as cofactor.

The enzyme catalyses N-terminal N-formyl-L-methionyl-[peptide] + H2O = N-terminal L-methionyl-[peptide] + formate. In terms of biological role, removes the formyl group from the N-terminal Met of newly synthesized proteins. Requires at least a dipeptide for an efficient rate of reaction. N-terminal L-methionine is a prerequisite for activity but the enzyme has broad specificity at other positions. The polypeptide is Peptide deformylase (Escherichia coli (strain K12 / DH10B)).